The primary structure comprises 364 residues: UDP-N-acetylglucosamine--N-acetylmuramyl-(pentapeptide) pyrophosphoryl-undecaprenol N-acetylglucosamine transferase (364 aa).

UDP-N-acetyl-alpha-D-glucosamine-binding positions include 10–12 (TGG), asparagine 124, serine 195, and glutamine 295.

It belongs to the glycosyltransferase 28 family. MurG subfamily.

The protein resides in the cell membrane. The catalysed reaction is di-trans,octa-cis-undecaprenyl diphospho-N-acetyl-alpha-D-muramoyl-L-alanyl-D-glutamyl-meso-2,6-diaminopimeloyl-D-alanyl-D-alanine + UDP-N-acetyl-alpha-D-glucosamine = di-trans,octa-cis-undecaprenyl diphospho-[N-acetyl-alpha-D-glucosaminyl-(1-&gt;4)]-N-acetyl-alpha-D-muramoyl-L-alanyl-D-glutamyl-meso-2,6-diaminopimeloyl-D-alanyl-D-alanine + UDP + H(+). It participates in cell wall biogenesis; peptidoglycan biosynthesis. Its function is as follows. Cell wall formation. Catalyzes the transfer of a GlcNAc subunit on undecaprenyl-pyrophosphoryl-MurNAc-pentapeptide (lipid intermediate I) to form undecaprenyl-pyrophosphoryl-MurNAc-(pentapeptide)GlcNAc (lipid intermediate II). This Bacillus pumilus (strain SAFR-032) protein is UDP-N-acetylglucosamine--N-acetylmuramyl-(pentapeptide) pyrophosphoryl-undecaprenol N-acetylglucosamine transferase.